The sequence spans 435 residues: GTPase Der (435 aa).

2 consecutive EngA-type G domains span residues 4–167 (PVVA…GDKA) and 175–350 (IRFS…ENQT). GTP-binding positions include 10 to 17 (GRPNVGKS), 57 to 61 (DTGGI), 119 to 122 (NKAD), 181 to 188 (GRPNVGKS), 228 to 232 (DTAGI), and 293 to 296 (NKWD). In terms of domain architecture, KH-like spans 351–435 (RRIQSSVLND…PIKILARKRK (85 aa)).

This sequence belongs to the TRAFAC class TrmE-Era-EngA-EngB-Septin-like GTPase superfamily. EngA (Der) GTPase family. As to quaternary structure, associates with the 50S ribosomal subunit.

GTPase that plays an essential role in the late steps of ribosome biogenesis. The sequence is that of GTPase Der from Lactobacillus johnsonii (strain CNCM I-12250 / La1 / NCC 533).